The primary structure comprises 190 residues: Homeobox protein SEBOX (190 aa).

Positions 1–11 are enriched in low complexity; it reads MPSPVDASSAD. 2 disordered regions span residues 1 to 24 and 82 to 161; these read MPSPVDASSADGGSGLGSHRRKRT and ILSP…VHPS. The segment at residues 19-78 is a DNA-binding region (homeobox); sequence HRRKRTTFSKGQLLELERAFAAWPYPNISTHEHLAWVTCLPEAKVQVWFQKRWAKIIKNR. Residues 89–100 show a composition bias toward polar residues; the sequence is CPQSSCSLPDTL.

This sequence belongs to the paired homeobox family.

The protein resides in the nucleus. Probable transcription factor involved in the control of specification of mesoderm and endoderm. The protein is Homeobox protein SEBOX (SEBOX) of Homo sapiens (Human).